The chain runs to 474 residues: tRNA modification GTPase MnmE (474 aa).

(6S)-5-formyl-5,6,7,8-tetrahydrofolate is bound by residues Arg-23, Glu-86, and Lys-125. The TrmE-type G domain occupies 221–396; that stretch reads GIPVAIVGEP…LKEKLLEYVN (176 aa). Residue Asn-231 coordinates K(+). Residues 231 to 236, 250 to 256, and 275 to 278 contribute to the GTP site; these read NVGKST, SEIAGTT, and DTAG. Ser-235 is a Mg(2+) binding site. Residues Ser-250, Ile-252, and Thr-255 each coordinate K(+). Thr-256 is a Mg(2+) binding site. Lys-474 is a binding site for (6S)-5-formyl-5,6,7,8-tetrahydrofolate.

The protein belongs to the TRAFAC class TrmE-Era-EngA-EngB-Septin-like GTPase superfamily. TrmE GTPase family. In terms of assembly, homodimer. Heterotetramer of two MnmE and two MnmG subunits. K(+) serves as cofactor.

The protein resides in the cytoplasm. Functionally, exhibits a very high intrinsic GTPase hydrolysis rate. Involved in the addition of a carboxymethylaminomethyl (cmnm) group at the wobble position (U34) of certain tRNAs, forming tRNA-cmnm(5)s(2)U34. This chain is tRNA modification GTPase MnmE, found in Christiangramia forsetii (strain DSM 17595 / CGMCC 1.15422 / KT0803) (Gramella forsetii).